A 358-amino-acid polypeptide reads, in one-letter code: DNA polymerase IV (358 aa).

The 182-residue stretch at 4–185 (IIHIDMDCYF…LPLIKIPGVG (182 aa)) folds into the UmuC domain. Positions 8 and 103 each coordinate Mg(2+). Glu104 is a catalytic residue.

The protein belongs to the DNA polymerase type-Y family. Monomer. Mg(2+) serves as cofactor.

The protein resides in the cytoplasm. The enzyme catalyses DNA(n) + a 2'-deoxyribonucleoside 5'-triphosphate = DNA(n+1) + diphosphate. Functionally, poorly processive, error-prone DNA polymerase involved in untargeted mutagenesis. Copies undamaged DNA at stalled replication forks, which arise in vivo from mismatched or misaligned primer ends. These misaligned primers can be extended by PolIV. Exhibits no 3'-5' exonuclease (proofreading) activity. May be involved in translesional synthesis, in conjunction with the beta clamp from PolIII. The sequence is that of DNA polymerase IV from Shewanella denitrificans (strain OS217 / ATCC BAA-1090 / DSM 15013).